A 668-amino-acid polypeptide reads, in one-letter code: MGGGVLKQQFVLHAPFLPCGDQPEAIRRLSQGITDGVPAQVLLGTTGSGKTFTMANVIANVNVPTLVLAHNKTLAAQLYQEFKAFFPENAVEYFISYYDYYQPEAYIARSDTYIEKSLLINDEIDKLRLSATRSILERRDTLIVSSISCIYGIGSPDNYSSMALTLEVGKEYPRSQLSSQLVRMHYQASSTPQRSAFRERGSVIDIFLAYESDLAVRLEFMNDTLISIEYVDPLTMIPSHTTSSITLYPGSHYVTPEAVREQAIRTIREELEQRMLFFEGRPVEQERLFQRTTHDIEMIKEIGFCKGIENYSRHFTGAAPGEPPTCLLDYFPDDFLLIIDESHQTLPQLRAMYRGDQSRKQSLVEYGFRLPSAFDNRPLTYEEARRYFHRVIYVSATPGDLEIQESRGHIIEQIIRPTGIPDPLPEIRPAKGQIDDLLEEIRQRLRKDQEKILVISVTKKLAEDIAAFLAELGIAATYLHSGIETAERTQILTDLRLGNIDVLIGVNLLREGIDLPEVSLVAILDADKEGFLRSSASLIQFCGRAARNIHGKVICYADRITPSMDHMLKETERRRKIQLDYNQQHKITPQPIIKPILANPITKEAGQEETRLKMQSSKELEASIKTYEEAMYQAAQEFQFDEAAKYRDLMNAAKKQLLFQKGEEENGD.

The 386-residue stretch at 31–416 (QGITDGVPAQ…RGHIIEQIIR (386 aa)) folds into the Helicase ATP-binding domain. ATP is bound at residue 44–51 (GTTGSGKT). Positions 97-120 (YYDYYQPEAYIARSDTYIEKSLLI) match the Beta-hairpin motif. The 164-residue stretch at 433–596 (QIDDLLEEIR…ITPQPIIKPI (164 aa)) folds into the Helicase C-terminal domain. Residues 621-656 (EASIKTYEEAMYQAAQEFQFDEAAKYRDLMNAAKKQ) enclose the UVR domain.

The protein belongs to the UvrB family. As to quaternary structure, forms a heterotetramer with UvrA during the search for lesions. Interacts with UvrC in an incision complex.

Its subcellular location is the cytoplasm. In terms of biological role, the UvrABC repair system catalyzes the recognition and processing of DNA lesions. A damage recognition complex composed of 2 UvrA and 2 UvrB subunits scans DNA for abnormalities. Upon binding of the UvrA(2)B(2) complex to a putative damaged site, the DNA wraps around one UvrB monomer. DNA wrap is dependent on ATP binding by UvrB and probably causes local melting of the DNA helix, facilitating insertion of UvrB beta-hairpin between the DNA strands. Then UvrB probes one DNA strand for the presence of a lesion. If a lesion is found the UvrA subunits dissociate and the UvrB-DNA preincision complex is formed. This complex is subsequently bound by UvrC and the second UvrB is released. If no lesion is found, the DNA wraps around the other UvrB subunit that will check the other stand for damage. The chain is UvrABC system protein B from Chlamydia trachomatis serovar D (strain ATCC VR-885 / DSM 19411 / UW-3/Cx).